The sequence spans 461 residues: Photosystem II CP43 reaction center protein (461 aa).

Residues methionine 1–glutamate 2 constitute a propeptide that is removed on maturation. Threonine 3 bears the N-acetylthreonine mark. Threonine 3 bears the Phosphothreonine mark. 5 helical membrane-spanning segments follow: residues leucine 57–alanine 81, leucine 122–asparagine 143, lysine 166–threonine 188, lysine 243–serine 263, and tryptophan 279–alanine 300. Glutamate 355 is a [CaMn4O5] cluster binding site. Residues arginine 435–proline 459 traverse the membrane as a helical segment.

Belongs to the PsbB/PsbC family. PsbC subfamily. PSII is composed of 1 copy each of membrane proteins PsbA, PsbB, PsbC, PsbD, PsbE, PsbF, PsbH, PsbI, PsbJ, PsbK, PsbL, PsbM, PsbT, PsbX, PsbY, PsbZ, Psb30/Ycf12, at least 3 peripheral proteins of the oxygen-evolving complex and a large number of cofactors. It forms dimeric complexes. It depends on Binds multiple chlorophylls and provides some of the ligands for the Ca-4Mn-5O cluster of the oxygen-evolving complex. It may also provide a ligand for a Cl- that is required for oxygen evolution. PSII binds additional chlorophylls, carotenoids and specific lipids. as a cofactor.

Its subcellular location is the plastid. It is found in the chloroplast thylakoid membrane. One of the components of the core complex of photosystem II (PSII). It binds chlorophyll and helps catalyze the primary light-induced photochemical processes of PSII. PSII is a light-driven water:plastoquinone oxidoreductase, using light energy to abstract electrons from H(2)O, generating O(2) and a proton gradient subsequently used for ATP formation. This is Photosystem II CP43 reaction center protein from Ceratophyllum demersum (Rigid hornwort).